The sequence spans 279 residues: 3-methyl-2-oxobutanoate hydroxymethyltransferase (279 aa).

2 residues coordinate Mg(2+): Asp44 and Asp83. Residues 44 to 45 (DS), Asp83, and Lys113 each bind 3-methyl-2-oxobutanoate. Glu115 contacts Mg(2+). Residue Glu182 is the Proton acceptor of the active site.

Belongs to the PanB family. In terms of assembly, homodecamer; pentamer of dimers. Mg(2+) is required as a cofactor.

It localises to the cytoplasm. It carries out the reaction 3-methyl-2-oxobutanoate + (6R)-5,10-methylene-5,6,7,8-tetrahydrofolate + H2O = 2-dehydropantoate + (6S)-5,6,7,8-tetrahydrofolate. The protein operates within cofactor biosynthesis; (R)-pantothenate biosynthesis; (R)-pantoate from 3-methyl-2-oxobutanoate: step 1/2. Its function is as follows. Catalyzes the reversible reaction in which hydroxymethyl group from 5,10-methylenetetrahydrofolate is transferred onto alpha-ketoisovalerate to form ketopantoate. This is 3-methyl-2-oxobutanoate hydroxymethyltransferase from Dehalococcoides mccartyi (strain CBDB1).